The chain runs to 467 residues: Cysteine--tRNA ligase (467 aa).

Cys-28 provides a ligand contact to Zn(2+). Positions 30–40 (MTVYDYCHLGH) match the 'HIGH' region motif. 3 residues coordinate Zn(2+): Cys-209, His-234, and Glu-238. Residues 266–270 (KMSKS) carry the 'KMSKS' region motif. Lys-269 provides a ligand contact to ATP.

This sequence belongs to the class-I aminoacyl-tRNA synthetase family. In terms of assembly, monomer. The cofactor is Zn(2+).

The protein resides in the cytoplasm. The enzyme catalyses tRNA(Cys) + L-cysteine + ATP = L-cysteinyl-tRNA(Cys) + AMP + diphosphate. The sequence is that of Cysteine--tRNA ligase from Hahella chejuensis (strain KCTC 2396).